A 180-amino-acid chain; its full sequence is MAKIGLFFGSNTGKTRKVAKSIKKRFDDETMSDALNVNRVSAEDFAQYQFLILGTPTLGEGELPGLSSDCENESWEEFLPKIEGLDFSGKTVALFGLGDQVGYPENYLDALGELYSFFKDRGAKIVGSWSTDGYEFESSEAVVDGKFVGLALDLDNQSGKTDERVAAWLAQIAPEFGLSL.

One can recognise a Flavodoxin-like domain in the interval 4 to 173 (IGLFFGSNTG…RVAAWLAQIA (170 aa)). Residues 10 to 15 (SNTGKT), Thr-57, Gly-61, Asp-99, 106 to 108 (NYL), and Asp-155 each bind FMN.

FMN is required as a cofactor.

Flavodoxins are low-potential electron donors to a number of redox enzymes. NifF is the electron donor to nitrogenase, and is thus implicated in nitrogen fixation. Does not function as an electron donor to nitrite reductase. The protein is Flavodoxin 2 of Azotobacter vinelandii.